The primary structure comprises 198 residues: Urease accessory protein UreE (198 aa).

Residues 137-198 (ARGAYHSPGG…RGHDHDHKHD (62 aa)) form a disordered region. A compositionally biased stretch (basic and acidic residues) spans 149–198 (HGHDHDHNHDHGHDHAHDHNHGHDHDHEHGYEHEHEHRHDRGHDHDHKHD).

It belongs to the UreE family.

The protein resides in the cytoplasm. Involved in urease metallocenter assembly. Binds nickel. Probably functions as a nickel donor during metallocenter assembly. In Rhizobium johnstonii (strain DSM 114642 / LMG 32736 / 3841) (Rhizobium leguminosarum bv. viciae), this protein is Urease accessory protein UreE.